A 63-amino-acid chain; its full sequence is High-potential iron-sulfur protein (63 aa).

C23, C26, C41, and C56 together coordinate [4Fe-4S] cluster.

Belongs to the high-potential iron-sulfur protein (HiPIP) family. As to quaternary structure, homodimer.

In terms of biological role, specific class of high-redox-potential 4Fe-4S ferredoxins. Functions in anaerobic electron transport in most purple and in some other photosynthetic bacteria and in at least one genus (Paracoccus) of halophilic, denitrifying bacteria. This is High-potential iron-sulfur protein (hip) from Rhodocyclus tenuis (Rhodospirillum tenue).